The chain runs to 1153 residues: Error-prone DNA polymerase (1153 aa).

Disordered stretches follow at residues 1-39 and 64-89; these read MFYSCCVSIEPRDPASEPTPTPRRPLRKSQPRSFSQAQP and VGEGQRRTTSLDPAEAEGTGAEGASQ.

It belongs to the DNA polymerase type-C family. DnaE2 subfamily.

The protein localises to the cytoplasm. The enzyme catalyses DNA(n) + a 2'-deoxyribonucleoside 5'-triphosphate = DNA(n+1) + diphosphate. Its function is as follows. DNA polymerase involved in damage-induced mutagenesis and translesion synthesis (TLS). It is not the major replicative DNA polymerase. The sequence is that of Error-prone DNA polymerase from Corynebacterium jeikeium (strain K411).